We begin with the raw amino-acid sequence, 438 residues long: 23S rRNA (uracil(1939)-C(5))-methyltransferase RlmD (438 aa).

The 60-residue stretch at 10-69 (KASVNTKHLSVDVVRLDHNSAGIAFVDKKPVFIEGALPEEQAIIQFIEQKKQYSRAKLIK) folds into the TRAM domain. [4Fe-4S] cluster contacts are provided by cysteine 82, cysteine 88, cysteine 91, and cysteine 169. The S-adenosyl-L-methionine site is built by glutamine 272, phenylalanine 301, asparagine 306, glutamate 322, asparagine 349, and aspartate 370. Cysteine 396 (nucleophile) is an active-site residue.

The protein belongs to the class I-like SAM-binding methyltransferase superfamily. RNA M5U methyltransferase family. RlmD subfamily.

The catalysed reaction is uridine(1939) in 23S rRNA + S-adenosyl-L-methionine = 5-methyluridine(1939) in 23S rRNA + S-adenosyl-L-homocysteine + H(+). Catalyzes the formation of 5-methyl-uridine at position 1939 (m5U1939) in 23S rRNA. This is 23S rRNA (uracil(1939)-C(5))-methyltransferase RlmD from Aliivibrio salmonicida (strain LFI1238) (Vibrio salmonicida (strain LFI1238)).